Reading from the N-terminus, the 151-residue chain is Ribosome maturation factor RimP (151 aa).

This sequence belongs to the RimP family.

The protein resides in the cytoplasm. Required for maturation of 30S ribosomal subunits. The polypeptide is Ribosome maturation factor RimP (Shewanella frigidimarina (strain NCIMB 400)).